The chain runs to 547 residues: Trigger factor-like protein TIG, Chloroplastic (547 aa).

The transit peptide at 1-77 directs the protein to the chloroplast; it reads MELCVISTTT…SHGGNFRLFA (77 aa). A78 bears the N-acetylalanine mark. In terms of domain architecture, PPIase FKBP-type spans 271–366; sequence GDLAVVDISA…LFYRDLPTLD (96 aa).

This sequence belongs to the FKBP-type PPIase family. Tig subfamily.

It is found in the plastid. The protein resides in the chloroplast. The catalysed reaction is [protein]-peptidylproline (omega=180) = [protein]-peptidylproline (omega=0). Its function is as follows. Involved in protein export. Acts as a chaperone by maintaining the newly synthesized protein in an open conformation. Functions as a peptidyl-prolyl cis-trans isomerase. This chain is Trigger factor-like protein TIG, Chloroplastic (TIG), found in Arabidopsis thaliana (Mouse-ear cress).